The primary structure comprises 224 residues: MAGQISPTRSALLASKASLKTASGGADLLKRKRDALIGEFFALVKDALAAREQLGGVSKGAYTSLFGAKAWDSPEAVESLSLAGSGDYAVNMQIESIYGVKVPRINIPERTQTTNFSPINVGARTIQAATDFGGVMEAIVKVAATETKLRRIGEEIKKTSRRVNALEQVVIPGIEDDIRFIRSVLDQREREASYTQKKIKAKIEAKAKQQRKDIQSGNHGSAAD.

The segment covering 205–214 has biased composition (basic and acidic residues); it reads AKAKQQRKDI. Residues 205–224 are disordered; the sequence is AKAKQQRKDIQSGNHGSAAD. The segment covering 215-224 has biased composition (polar residues); it reads QSGNHGSAAD.

Belongs to the V-ATPase D subunit family.

In terms of biological role, produces ATP from ADP in the presence of a proton gradient across the membrane. The polypeptide is V-type ATP synthase subunit D (Deinococcus deserti (strain DSM 17065 / CIP 109153 / LMG 22923 / VCD115)).